Reading from the N-terminus, the 323-residue chain is MRTATLYRYSVPMEAGVILRHQRLKSRDGLLVKLQQGELSGWGEIAPLPEFSQETLDQAQVAAECWLQHWVSGVESDDSVLPSVAFGLSCAQAELKQTLPLSADYRKASLCTGDPDELFAVLQALPGEKVAKVKVGLYEAVRDGMIVNVLLEALPDLTLRLDANRSWSRAKADGFAKYVNPALRSRIAFLEEPCKTRAESREFAQDTGIAIAWDESVREADFQVEAEPGVAAIVIKPTLVGSLARCQQLVQQAHQAGLVAVISSSIESSLGLTQLARLAAWLTPATVPGLDTLDLMQAQVVRPWPDSPLPLITTEQLGVVWHR.

The active-site Proton donor is the Lys-134. The Mg(2+) site is built by Asp-162, Glu-191, and Asp-214. Catalysis depends on Lys-236, which acts as the Proton acceptor.

Belongs to the mandelate racemase/muconate lactonizing enzyme family. MenC type 1 subfamily. Requires a divalent metal cation as cofactor.

The enzyme catalyses (1R,6R)-6-hydroxy-2-succinyl-cyclohexa-2,4-diene-1-carboxylate = 2-succinylbenzoate + H2O. It participates in quinol/quinone metabolism; 1,4-dihydroxy-2-naphthoate biosynthesis; 1,4-dihydroxy-2-naphthoate from chorismate: step 4/7. Its pathway is quinol/quinone metabolism; menaquinone biosynthesis. Its function is as follows. Converts 2-succinyl-6-hydroxy-2,4-cyclohexadiene-1-carboxylate (SHCHC) to 2-succinylbenzoate (OSB). The chain is o-succinylbenzoate synthase from Yersinia pseudotuberculosis serotype I (strain IP32953).